A 141-amino-acid chain; its full sequence is MLMPKRTKFRKMMKGRNRGMAHRGNSLAYGDFGIKAVEHGRIDSRQIEASRIAMTRKVKRQAKVWIMVFPDKPLTAKPLETRMGKGKGSVDKWVMNIKPGRICFEMAGVGEELAREALALAMHKLPFKTKIVTRDSENELY.

The protein belongs to the universal ribosomal protein uL16 family. In terms of assembly, part of the 50S ribosomal subunit.

Its function is as follows. Binds 23S rRNA and is also seen to make contacts with the A and possibly P site tRNAs. This Aliarcobacter butzleri (strain RM4018) (Arcobacter butzleri) protein is Large ribosomal subunit protein uL16.